The sequence spans 373 residues: MLPFLRSELARCQPHHPNPGGTGMAMDILDTNECPYDLPTDLKQTLADRYVEAIASNRYPDGSHTDLKAAIVDYLSEQTAGQWQPGPEHVTVGNGSDELIRSILIATCLGGQGSVLVAEPTFSMYGIVAETLGIPVVRIGRDPQTWEMDLAAAETAITQTEGTPVRLCFVVHPNSPTANPLTEAEKDWLRQVPPQILVVIDEAYFEFSGETLLAELPQHPNWLITRTFSKALRLAAHRVGYGIGDPQLIAALEAIRLPYNLPSVAQLAATLALEARSQLLSAIPRLITERDRLYRKLQVVSQLQVWPSASNFLFLKTQSSSQTAALAAQLKAQGTLVRHTADGLRITIGSPAENERTLAHLQTAITQSLPATV.

K230 carries the post-translational modification N6-(pyridoxal phosphate)lysine.

Belongs to the class-II pyridoxal-phosphate-dependent aminotransferase family. Histidinol-phosphate aminotransferase subfamily. As to quaternary structure, homodimer. It depends on pyridoxal 5'-phosphate as a cofactor.

It catalyses the reaction L-histidinol phosphate + 2-oxoglutarate = 3-(imidazol-4-yl)-2-oxopropyl phosphate + L-glutamate. It participates in amino-acid biosynthesis; L-histidine biosynthesis; L-histidine from 5-phospho-alpha-D-ribose 1-diphosphate: step 7/9. In Synechococcus sp. (strain ATCC 27144 / PCC 6301 / SAUG 1402/1) (Anacystis nidulans), this protein is Histidinol-phosphate aminotransferase.